The following is a 1274-amino-acid chain: DENN domain-containing protein 5B (1274 aa).

Serine 2 carries the post-translational modification N-acetylserine. The uDENN domain occupies 39 to 244; that stretch reads DELAGENFDQ…EVPLPPPGRS (206 aa). A phosphoserine mark is found at serine 49 and serine 178. A cDENN domain is found at 263–399; sequence ELPLSDYPLR…VDFIQELSEV (137 aa). In terms of domain architecture, dDENN spans 401-581; the sequence is LQFGIPPEGS…DNKIMSQWEE (181 aa). An RUN 1 domain is found at 772-932; sequence LEENTLIASL…DYFCFTSVFT (161 aa). Serine 822 is subject to Phosphoserine. The chain crosses the membrane as a helical span at residues 916 to 936; that stretch reads LLSLNAVDYFCFTSVFTTIMI. Residues 936-1044 form the PLAT domain; it reads IPYRSVIIPI…DDGSLERILI (109 aa). Threonine 1062 carries the phosphothreonine modification. 3 positions are modified to phosphoserine: serine 1068, serine 1076, and serine 1079. In terms of domain architecture, RUN 2 spans 1118-1267; the sequence is TVLLCGENGL…QDFTIVLEGS (150 aa).

This sequence belongs to the RAB6IP1 family.

The protein resides in the membrane. In terms of biological role, guanine nucleotide exchange factor (GEF) which may activate RAB39A and/or RAB39B. Promotes the exchange of GDP to GTP, converting inactive GDP-bound Rab proteins into their active GTP-bound form. This Mus musculus (Mouse) protein is DENN domain-containing protein 5B (Dennd5b).